The following is a 92-amino-acid chain: DNA-directed RNA polymerase subunit Rpo11 (92 aa).

It belongs to the archaeal Rpo11/eukaryotic RPB11/RPC19 RNA polymerase subunit family. In terms of assembly, part of the RNA polymerase complex.

It localises to the cytoplasm. The catalysed reaction is RNA(n) + a ribonucleoside 5'-triphosphate = RNA(n+1) + diphosphate. In terms of biological role, DNA-dependent RNA polymerase (RNAP) catalyzes the transcription of DNA into RNA using the four ribonucleoside triphosphates as substrates. The polypeptide is DNA-directed RNA polymerase subunit Rpo11 (Halorubrum lacusprofundi (strain ATCC 49239 / DSM 5036 / JCM 8891 / ACAM 34)).